Consider the following 798-residue polypeptide: MAVRELCFSRQRQVLFLFLFWGVSLAGSGFGRYSVTEETEKGSFVVNLAKDLGLAEGKLAARGTRVVSDDNKQYLLLDSHTGNLLTNEKLDREKLCGPKEPCMLYFQILMDDPFQIYRAELRVRDINDHAPVFQDKETVLKISENTAEGTAFRLERAQDPDGGLNGIQNYTISPNSFFHIKISGSDEGMIYPELVLDKALDREEQEELSLTLTALDGGSPSRSGTSTVRIVVLDVNDNAPQFAQALYETQAPENSPIGFLIVKVSAEDVDSGVNAEVSYSFFDASENIRTTFQINPFSGEIFLRELLDYELVNSYKINIQAMDGGGLSARCRVLVEVLDTNDNPPELIVSSFSNSVAENSPETPLAVFKINDRDSGENGKMVCYIQENLPFLLKPSVENFYILITEGALDRELRAEYNITITVTDLGTPRLKTEHNITVLVSDVNDNAPAFTQTSYTLFVRENNSPALHIGSVSATDGDSGTNAQVTYSLLPPQDLHLPLASLVSINADNGHLFALRSLDYEALQAFEFRVGATDRGSPALSSEALVRVLVLDANDNSPFVLYPLQNGSAPCTELVPRAAEPGYLVTKVVAVDGDSGQNAWLSYQLLKATEPGLFGVWAHNGEVRTARLLSERDAAKHRLVVLVKDNGEPPRSATATLHLLLVDGFSQPYLPLPEAAPAQAQADLLTVYLVVALASVSSLFLFSVLLFVAVRLCRRSRAASVGRCSVPEGPFPGHLVDVSGAETLSQSYQYEVCLTGGPGTSEFKFLKPVISDIQAQGPGRKGEENSTFRNSFGFNIQ.

A signal peptide spans 1–26 (MAVRELCFSRQRQVLFLFLFWGVSLA). At 27–690 (GSGFGRYSVT…AQADLLTVYL (664 aa)) the chain is on the extracellular side. Cadherin domains lie at 35 to 133 (VTEE…APVF), 138 to 242 (TVLK…APQF), 247 to 347 (YETQ…PPEL), 352 to 451 (FSNS…APAF), and 456 to 561 (YTLF…SPFV). Asn-169 carries an N-linked (GlcNAc...) asparagine glycan. N-linked (GlcNAc...) asparagine glycans are attached at residues Asn-418 and Asn-436. Asn-567 is a glycosylation site (N-linked (GlcNAc...) asparagine). The 104-residue stretch at 568–671 (GSAPCTELVP…LVDGFSQPYL (104 aa)) folds into the Cadherin 6 domain. Residues 691 to 711 (VVALASVSSLFLFSVLLFVAV) form a helical membrane-spanning segment. The Cytoplasmic segment spans residues 712–798 (RLCRRSRAAS…FRNSFGFNIQ (87 aa)).

It is found in the cell membrane. Potential calcium-dependent cell-adhesion protein. May be involved in the establishment and maintenance of specific neuronal connections in the brain. In Pan troglodytes (Chimpanzee), this protein is Protocadherin beta-10 (PCDHB10).